The chain runs to 520 residues: MAGGLMQLVAYGAQDVYLTGNPQITFWKVTYRRHTNFAMESIEQTFNGQADFGRRVTCTISRNGDLAYRTYLQITLPEIGQSLSSGAVYARWLDFPGEQLISQVEVEIGGQRIDRQYGDWMHIWNQLTLSKEQERGYFKMVGNTTQLTYVCDPNFAAIDGPCSANGVRQVCAPRDALPETTLYVPLQFWYCRNPGLALPLIALQYHEVKINLDIRNIEECLWAVSAIDGTGTKITDAYKQSLAAASLFVDYIFLDTDERRRMAQNPHEYLIEQLQFTGDESVGSSSNKIKLNLNHPCKELIWVVQPDANVDYCSSLTASTHLNNLLGAQPFNYTDAFDALPNAVHAFGGQASASGANAVINASGLFEDPFSNDIQSSVLDSGAATGADSGVSDAGTFVLAETALDMHCWGENPVIVAKLQLNGQDRFSEREGTYFDLVQPYQHHTRAPDSGINVYSFALHPEEHQPSGTCNFSRIDNATLQLVLSNATVQGVNTAKVRVYAVNYNVLRIMSGMGGLAYSN.

The protein belongs to the NCLDV major capsid protein family.

It is found in the virion. In terms of biological role, major capsid protein that self assembles to form an icosahedral capsid with a T=219 symmetry. This is Major capsid protein (MCP) from Phaeocystis pouchetii (PpV01).